The chain runs to 236 residues: Peptidase E (236 aa).

Catalysis depends on charge relay system residues serine 122, aspartate 137, and histidine 159.

The protein belongs to the peptidase S51 family.

The protein localises to the cytoplasm. The enzyme catalyses Dipeptidase E catalyzes the hydrolysis of dipeptides Asp-|-Xaa. It does not act on peptides with N-terminal Glu, Asn or Gln, nor does it cleave isoaspartyl peptides.. Its function is as follows. Hydrolyzes dipeptides containing N-terminal aspartate residues. May play a role in allowing the cell to use peptide aspartate to spare carbon otherwise required for the synthesis of the aspartate family of amino acids. The protein is Peptidase E of Shewanella putrefaciens (strain CN-32 / ATCC BAA-453).